The primary structure comprises 614 residues: Phosphomethylpyrimidine synthase (614 aa).

Residues 1 to 16 (MNAQLSALQQQAQQLS) show a composition bias toward low complexity. The tract at residues 1 to 36 (MNAQLSALQQQAQQLSESVTRPIPGSRKIHVPGSRP) is disordered. Substrate is bound by residues Asn230, Met259, Tyr288, His324, 344 to 346 (SRG), 385 to 388 (DGLR), and Glu424. A Zn(2+)-binding site is contributed by His428. Tyr451 lines the substrate pocket. A Zn(2+)-binding site is contributed by His492. Positions 572, 575, and 580 each coordinate [4Fe-4S] cluster.

Belongs to the ThiC family. As to quaternary structure, homodimer. [4Fe-4S] cluster is required as a cofactor.

The catalysed reaction is 5-amino-1-(5-phospho-beta-D-ribosyl)imidazole + S-adenosyl-L-methionine = 4-amino-2-methyl-5-(phosphooxymethyl)pyrimidine + CO + 5'-deoxyadenosine + formate + L-methionine + 3 H(+). Its pathway is cofactor biosynthesis; thiamine diphosphate biosynthesis. Functionally, catalyzes the synthesis of the hydroxymethylpyrimidine phosphate (HMP-P) moiety of thiamine from aminoimidazole ribotide (AIR) in a radical S-adenosyl-L-methionine (SAM)-dependent reaction. The sequence is that of Phosphomethylpyrimidine synthase from Stenotrophomonas maltophilia (strain R551-3).